The chain runs to 1066 residues: FHIP family protein GH13096 (1066 aa).

A compositionally biased stretch (polar residues) spans 1–15 (MSWLRTSPLRQSLTR). The tract at residues 1–33 (MSWLRTSPLRQSLTRNSGGNGSGGSGNSGNASA) is disordered. Over residues 18 to 27 (GGNGSGGSGN) the composition is skewed to gly residues. Residue S512 is modified to Phosphoserine. Disordered stretches follow at residues 647–688 (SFKW…NSSG), 827–885 (DNSP…RSDN), and 942–1010 (SRGV…FNSE). The span at 658–687 (NDATTTTATSDPDVEHNNSSNHNNSSINSS) shows a compositional bias: low complexity. The residue at position 829 (S829) is a Phosphoserine. Residues 836–856 (HQQQQLQHTTNSTHQQQQAQQ) are compositionally biased toward low complexity. The segment covering 950–963 (PRGNTCETSLSTTP) has biased composition (polar residues). The segment covering 967-996 (AQATSASSTNSSIGGSTQTLSATHSSSTLH) has biased composition (low complexity). Over residues 1001 to 1010 (GPQTASFNSE) the composition is skewed to polar residues.

Belongs to the FHIP family.

The sequence is that of FHIP family protein GH13096 from Drosophila grimshawi (Hawaiian fruit fly).